Reading from the N-terminus, the 795-residue chain is Copper-exporting P-type ATPase (795 aa).

2 consecutive HMA domains span residues 5-70 and 72-138; these read QNAT…YDVV and DKAE…YDAQ. C16, C19, C83, and C86 together coordinate Cu(+). The next 6 helical transmembrane spans lie at 161 to 181, 187 to 207, 224 to 244, 256 to 276, 412 to 432, and 440 to 460; these read LMIS…HLFN, ILMN…IIGW, MDVL…YEMI, LYFE…YLEA, YFVP…ITLV, and ALVA…GLAT. The active-site 4-aspartylphosphate intermediate is D496. 2 residues coordinate Mg(2+): D690 and D694. 2 consecutive transmembrane segments (helical) span residues 747-764 and 770-788; these read NLFW…IAAM and WIAG…SNAL.

This sequence belongs to the cation transport ATPase (P-type) (TC 3.A.3) family. Type IB subfamily.

It is found in the cell membrane. It carries out the reaction Cu(+)(in) + ATP + H2O = Cu(+)(out) + ADP + phosphate + H(+). Functionally, involved in copper export. This Staphylococcus haemolyticus (strain JCSC1435) protein is Copper-exporting P-type ATPase (copA).